The following is a 459-amino-acid chain: Glycosyl hydrolase family 109 protein (459 aa).

The segment at residues methionine 1–alanine 45 is a signal peptide (tat-type signal). Residues asparagine 70 to arginine 71, aspartate 92, tryptophan 141 to histidine 144, glutamate 161 to cysteine 162, and asparagine 190 each bind NAD(+). Substrate-binding positions include tyrosine 219, arginine 238, tyrosine 250–histidine 253, and tyrosine 332. Tyrosine 250 lines the NAD(+) pocket. A disordered region spans residues aspartate 440 to alanine 459.

This sequence belongs to the Gfo/Idh/MocA family. Glycosyl hydrolase 109 subfamily. NAD(+) is required as a cofactor. In terms of processing, predicted to be exported by the Tat system. The position of the signal peptide cleavage has not been experimentally proven.

In terms of biological role, glycosidase. The polypeptide is Glycosyl hydrolase family 109 protein (Saccharopolyspora erythraea (strain ATCC 11635 / DSM 40517 / JCM 4748 / NBRC 13426 / NCIMB 8594 / NRRL 2338)).